The chain runs to 284 residues: 2-dehydro-3-deoxyphosphooctonate aldolase (284 aa).

This sequence belongs to the KdsA family.

It localises to the cytoplasm. The catalysed reaction is D-arabinose 5-phosphate + phosphoenolpyruvate + H2O = 3-deoxy-alpha-D-manno-2-octulosonate-8-phosphate + phosphate. Its pathway is carbohydrate biosynthesis; 3-deoxy-D-manno-octulosonate biosynthesis; 3-deoxy-D-manno-octulosonate from D-ribulose 5-phosphate: step 2/3. It functions in the pathway bacterial outer membrane biogenesis; lipopolysaccharide biosynthesis. This chain is 2-dehydro-3-deoxyphosphooctonate aldolase, found in Klebsiella pneumoniae subsp. pneumoniae (strain ATCC 700721 / MGH 78578).